The following is a 488-amino-acid chain: Probable glycine dehydrogenase (decarboxylating) subunit 2 (488 aa).

An N6-(pyridoxal phosphate)lysine modification is found at K273.

It belongs to the GcvP family. C-terminal subunit subfamily. In terms of assembly, the glycine cleavage system is composed of four proteins: P, T, L and H. In this organism, the P 'protein' is a heterodimer of two subunits. Pyridoxal 5'-phosphate is required as a cofactor.

It catalyses the reaction N(6)-[(R)-lipoyl]-L-lysyl-[glycine-cleavage complex H protein] + glycine + H(+) = N(6)-[(R)-S(8)-aminomethyldihydrolipoyl]-L-lysyl-[glycine-cleavage complex H protein] + CO2. Functionally, the glycine cleavage system catalyzes the degradation of glycine. The P protein binds the alpha-amino group of glycine through its pyridoxal phosphate cofactor; CO(2) is released and the remaining methylamine moiety is then transferred to the lipoamide cofactor of the H protein. This is Probable glycine dehydrogenase (decarboxylating) subunit 2 from Halalkalibacterium halodurans (strain ATCC BAA-125 / DSM 18197 / FERM 7344 / JCM 9153 / C-125) (Bacillus halodurans).